The sequence spans 27 residues: Paragonial peptide PS-1 (27 aa).

Residues 1-17 are compositionally biased toward low complexity; that stretch reads DVPSANANANNQRTAAA. The disordered stretch occupies residues 1–27; sequence DVPSANANANNQRTAAAKPQANAEASS.

Main cells of the accessory glands of males (paragonial gland).

It localises to the secreted. Represses female sexual receptivity and stimulates oviposition. This peptide has a low activity. This Drosophila funebris (Fruit fly) protein is Paragonial peptide PS-1 (PapC).